Here is a 486-residue protein sequence, read N- to C-terminus: Scarecrow-like protein 15 (486 aa).

A disordered region spans residues 1–28; it reads MKIPASSPQDTTNNNNNTNSTDSNHLSM. Residues 10–24 are compositionally biased toward low complexity; that stretch reads DTTNNNNNTNSTDSN. A GRAS domain is found at 113-485; the sequence is DSVDNGGFDF…RALVATSAWR (373 aa). The tract at residues 120–179 is leucine repeat I (LRI); that stretch reads FDFIEDLIRVVDCVESDELQLAQVVLSRLNQRLRSPAGRPLQRAAFYFKEALGSFLTGSN. The segment at 198–266 is VHIID; that stretch reads IKEYSGISPI…VSGGFLRVTA (69 aa). Residues 232 to 236 carry the VHIID motif; it reads VHVVD. Positions 278–310 are leucine repeat II (LRII); that stretch reads LVKENLTQFAAEMKIRFQIEFVLMKTFEMLSFK. The tract at residues 320-410 is PFYRE; the sequence is TVVLISPAIF…AFVLRPKISA (91 aa). Residues 413-485 form an SAW region; it reads ETAADRRHTG…RALVATSAWR (73 aa).

Belongs to the GRAS family. As to expression, expressed in seedlings, roots, leaves and flowers.

It is found in the nucleus. In terms of biological role, probable transcription factor involved in plant development. In Arabidopsis thaliana (Mouse-ear cress), this protein is Scarecrow-like protein 15 (SCL15).